Consider the following 233-residue polypeptide: uncharacterized protein (233 aa).

This is an uncharacterized protein from Acanthamoeba polyphaga (Amoeba).